A 414-amino-acid chain; its full sequence is 3-phosphoshikimate 1-carboxyvinyltransferase (414 aa).

K20, S21, and R25 together coordinate 3-phosphoshikimate. Phosphoenolpyruvate is bound at residue K20. Residue R113 coordinates phosphoenolpyruvate. S154, S155, Q156, S181, D296, and K323 together coordinate 3-phosphoshikimate. Q156 contributes to the phosphoenolpyruvate binding site. D296 acts as the Proton acceptor in catalysis. Phosphoenolpyruvate-binding residues include R327, R371, and K395.

It belongs to the EPSP synthase family. In terms of assembly, monomer.

The protein resides in the cytoplasm. The catalysed reaction is 3-phosphoshikimate + phosphoenolpyruvate = 5-O-(1-carboxyvinyl)-3-phosphoshikimate + phosphate. It participates in metabolic intermediate biosynthesis; chorismate biosynthesis. Catalyzes the transfer of the enolpyruvyl moiety of phosphoenolpyruvate (PEP) to the 5-hydroxyl of shikimate-3-phosphate (S3P) to produce enolpyruvyl shikimate-3-phosphate and inorganic phosphate. The sequence is that of 3-phosphoshikimate 1-carboxyvinyltransferase from Saccharolobus solfataricus (strain ATCC 35092 / DSM 1617 / JCM 11322 / P2) (Sulfolobus solfataricus).